We begin with the raw amino-acid sequence, 370 residues long: 4-hydroxy-3-methylbut-2-en-1-yl diphosphate synthase (flavodoxin) (370 aa).

4 residues coordinate [4Fe-4S] cluster: Cys270, Cys273, Cys305, and Glu312.

The protein belongs to the IspG family. The cofactor is [4Fe-4S] cluster.

It carries out the reaction (2E)-4-hydroxy-3-methylbut-2-enyl diphosphate + oxidized [flavodoxin] + H2O + 2 H(+) = 2-C-methyl-D-erythritol 2,4-cyclic diphosphate + reduced [flavodoxin]. Its pathway is isoprenoid biosynthesis; isopentenyl diphosphate biosynthesis via DXP pathway; isopentenyl diphosphate from 1-deoxy-D-xylulose 5-phosphate: step 5/6. In terms of biological role, converts 2C-methyl-D-erythritol 2,4-cyclodiphosphate (ME-2,4cPP) into 1-hydroxy-2-methyl-2-(E)-butenyl 4-diphosphate. In Hamiltonella defensa subsp. Acyrthosiphon pisum (strain 5AT), this protein is 4-hydroxy-3-methylbut-2-en-1-yl diphosphate synthase (flavodoxin).